A 997-amino-acid chain; its full sequence is Kinesin-like protein KIF19 (997 aa).

The region spanning 11–346 (QLTVALRIRP…LTYADRAKNI (336 aa)) is the Kinesin motor domain. ATP is bound at residue 104–111 (GPTGCGKT). A coiled-coil region spans residues 360 to 437 (HIAQYTSIIS…REQMDIRRQL (78 aa)). Residues 468 to 491 (RARKWRDEHRKETYGKDDSEKDSD) are compositionally biased toward basic and acidic residues. Residues 468-503 (RARKWRDEHRKETYGKDDSEKDSDTGDDQSDFIEPP) are disordered. Positions 508–577 (ARETIQILEG…ELEIENTEMQ (70 aa)) form a coiled coil. Disordered regions lie at residues 662 to 690 (NLTA…RNPI), 792 to 811 (GDRL…SMSE), and 848 to 890 (GGGS…SRSF). 2 stretches are compositionally biased toward basic and acidic residues: residues 792 to 802 (GDRLQPMKERS) and 869 to 880 (QKLEKREESLEV). Residues 861–889 (HRTQKKQAQKLEKREESLEVKRRKKRSRS) are a coiled coil.

Belongs to the TRAFAC class myosin-kinesin ATPase superfamily. Kinesin family.

The protein resides in the cytoplasm. Its subcellular location is the cytoskeleton. It localises to the cell projection. The protein localises to the cilium. In terms of biological role, plus end-directed microtubule-dependent motor protein that regulates the length of motile cilia by mediating depolymerization of microtubules at ciliary tips. This is Kinesin-like protein KIF19 (kif19) from Xenopus laevis (African clawed frog).